Consider the following 343-residue polypeptide: Mitochondrial amidoxime-reducing component 1 (343 aa).

The Mitochondrial matrix segment spans residues 1 to 25 (MSNTVFSGAVGPLRAAALSISRHRL). The chain crosses the membrane as a helical; Signal-anchor for type II membrane protein span at residues 26-44 (PLLCAAGLGLTAVASWMWW). Topologically, residues 45 to 343 (RKRQGEAEDL…DPVYRVTRKG (299 aa)) are cytoplasmic. Residues K69, S70, and R94 each coordinate Mo-molybdopterin. Residues 95–186 (HWLVVTEEGN…SSQPYRLVHF (92 aa)) are MOSC N-terminal region. An MOSC domain is found at 181–339 (YRLVHFEADV…IRVGDPVYRV (159 aa)). Mo-molybdopterin is bound by residues S215, R242, R276, C277, and Y321.

Mo-molybdopterin is required as a cofactor.

It localises to the mitochondrion outer membrane. Its subcellular location is the membrane. The enzyme catalyses N(omega)-hydroxy-L-arginine + 2 Fe(II)-[cytochrome b5] + 2 H(+) = L-arginine + 2 Fe(III)-[cytochrome b5] + H2O. Functionally, catalyzes the reduction of N-oxygenated molecules, acting as a counterpart of cytochrome P450 and flavin-containing monooxygenases in metabolic cycles. As a component of prodrug-converting system, reduces a multitude of N-hydroxylated prodrugs particularly amidoximes, leading to increased drug bioavailability. May be involved in mitochondrial N(omega)-hydroxy-L-arginine (NOHA) reduction, regulating endogenous nitric oxide levels and biosynthesis. Postulated to cleave the N-OH bond of N-hydroxylated substrates in concert with electron transfer from NADH to cytochrome b5 reductase then to cytochrome b5, the ultimate electron donor that primes the active site for substrate reduction. The protein is Mitochondrial amidoxime-reducing component 1 (mtarc1) of Xenopus laevis (African clawed frog).